Reading from the N-terminus, the 105-residue chain is Met repressor (105 aa).

The protein belongs to the MetJ family. In terms of assembly, homodimer.

The protein localises to the cytoplasm. Functionally, this regulatory protein, when combined with SAM (S-adenosylmethionine) represses the expression of the methionine regulon and of enzymes involved in SAM synthesis. The sequence is that of Met repressor from Haemophilus ducreyi (strain 35000HP / ATCC 700724).